The chain runs to 278 residues: Rhomboid protease GlpG (278 aa).

6 helical membrane passes run 95 to 115 (GPLTLGVMALCIVVYILMQIL), 143 to 163 (AFLHFSLLHITFNLLWWWYLG), 170 to 190 (LGSGKLFVLAVVSAFFSGWAQ), 192 to 212 (LFSGALFGGLSGVVYALMGYC), 224 to 241 (LMLPRGLMVFSVLWLVAG), and 245 to 267 (ILGMSIANAAHVAGLVLGLLMAF). Ser-202 acts as the Nucleophile in catalysis. The active site involves His-255.

Belongs to the peptidase S54 family.

The protein resides in the cell inner membrane. It catalyses the reaction Cleaves type-1 transmembrane domains using a catalytic dyad composed of serine and histidine that are contributed by different transmembrane domains.. Rhomboid-type serine protease that catalyzes intramembrane proteolysis. The chain is Rhomboid protease GlpG from Serratia proteamaculans (strain 568).